Reading from the N-terminus, the 59-residue chain is uncharacterized protein (59 aa).

This is an uncharacterized protein from Acidianus hospitalis (AFV-1).